The chain runs to 277 residues: Methyltransferase adrK (277 aa).

S-adenosyl-L-methionine-binding positions include 123–124, 150–151, and 151–152; these read DL, DV, and VL.

This sequence belongs to the class I-like SAM-binding methyltransferase superfamily. In terms of assembly, homodimer.

The protein operates within secondary metabolite biosynthesis; terpenoid biosynthesis. Its function is as follows. Methyltransferase; part of the gene cluster that mediates the biosynthesis of andrastins, meroterpenoid compounds that exhibit inhibitory activity against ras farnesyltransferase, suggesting that they could be promising leads for antitumor agents. The first step of the pathway is the synthesis of 3,5-dimethylorsellinic acid (DMOA) by the polyketide synthase adrD via condensation of one acetyl-CoA starter unit with 3 malonyl-CoA units and 2 methylations. DMAO is then converted to farnesyl-DMAO by the prenyltransferase adrG. The methyltransferase adrK catalyzes the methylation of the carboxyl group of farnesyl-DMAO to farnesyl-DMAO methyl ester which is further converted to epoxyfarnesyl-DMAO methyl ester by the FAD-dependent monooxygenase adrH. The terpene cyclase adrI then catalyzes the carbon skeletal rearrangement to generate the andrastin E, the first compound in the pathway having the andrastin scaffold, with the tetracyclic ring system. The post-cyclization tailoring enzymes adrF, adrE, adrJ, and adrA, are involved in the conversion of andrastin E into andrastin A. The short chain dehydrogenase adrF is responsible for the oxidation of the C-3 a hydroxyl group of andrastin E to yield the corresponding ketone, andrastin D. The ketoreductase adrE stereoselectively reduces the carbonyl moiety to reverse the stereochemistry of the C-3 position to yield andrastin F. The acetyltransferase adrJ is the acetyltransferase that attaches the acetyl group to the C-3 hydroxyl group of andrastin F to yield andrastin C. Finally, the cytochrome P450 monooxygenase adrA catalyzes two sequential oxidation reactions of the C-23 methyl group, to generate the corresponding alcohol andrastin B, and aldehyde andrastin A. The polypeptide is Methyltransferase adrK (Penicillium rubens (strain ATCC 28089 / DSM 1075 / NRRL 1951 / Wisconsin 54-1255) (Penicillium chrysogenum)).